The chain runs to 63 residues: Conotoxin PnMRCL-0111 (63 aa).

The first 22 residues, 1–22, serve as a signal peptide directing secretion; the sequence is MHCLSVFVILLLLTASAPSVDA. A propeptide spanning residues 23 to 50 is cleaved from the precursor; sequence QPKTEDDVPLSSFHDDLQRTVRTLLDIR. Trp62 is subject to Tryptophan amide.

It belongs to the conotoxin T superfamily. Contains 2 disulfide bonds that can be either 'C1-C3, C2-C4' or 'C1-C4, C2-C3', since these disulfide connectivities have been observed for conotoxins with cysteine framework V (for examples, see AC P0DQQ7 and AC P81755). In terms of tissue distribution, expressed by the venom duct.

It localises to the secreted. The chain is Conotoxin PnMRCL-0111 from Conus pennaceus (Feathered cone).